A 365-amino-acid chain; its full sequence is MPAHSFRIAAIPGDGIGLEVLPEGIRVLEAAALKHGLALEFDTFEWASCDYYLQHGKMMPDDWAEQLKQYDAIYFGAVDWPDKVPDHISLWGSLLKFRREFDQYVNIRPVRLFPGVPCALANRKVGDIDFVVVRENTEGEYSSLGGIMFENTENEIVIQESIFTRRGVDRILKYAFDLAEKRERKHVTSATKSNGMAISMPYWDKRTEAMAAHYPHVSWDKQHIDILCARFVLQPERFDVVVVASNLFGDILSDLGPACAGTIGIAPSANLNPERNFPSLFEPVHGSAPDIFGKNIANPIAMIWSGALMLEFLGQGDERYQRAHDDMLNAIERVIADGSVTPDMGGTLSTQQVGAAISDTLARLD.

Asp225, Asp250, and Asp254 together coordinate Mn(2+).

It belongs to the isocitrate and isopropylmalate dehydrogenases family. As to quaternary structure, homodimer. Mg(2+) serves as cofactor. Requires Mn(2+) as cofactor. It depends on K(+) as a cofactor.

It is found in the cytoplasm. It carries out the reaction tartrate + NAD(+) = 2-hydroxy-3-oxosuccinate + NADH + H(+). The enzyme catalyses (2R,3S)-tartrate + NAD(+) = 2-hydroxy-3-oxosuccinate + NADH + H(+). The catalysed reaction is (2R,3R)-tartrate + NAD(+) = 2-hydroxy-3-oxosuccinate + NADH + H(+). It catalyses the reaction (2R,3R)-tartrate + H(+) = (R)-glycerate + CO2. It carries out the reaction (R)-malate + NAD(+) = pyruvate + CO2 + NADH. The protein operates within carbohydrate acid metabolism; tartrate degradation; 2-hydroxy-3-oxosuccinate from L-tartrate: step 1/1. It functions in the pathway carbohydrate acid metabolism; tartrate degradation; 2-hydroxy-3-oxosuccinate from meso-tartrate: step 1/1. It participates in carbohydrate acid metabolism; tartrate degradation; D-glycerate from L-tartrate: step 1/1. Its function is as follows. Has multiple catalytic activities. Apart from catalyzing the oxidation of (+)-tartrate to oxaloglycolate, also converts meso-tartrate to D-glycerate and catalyzes the oxidative decarboxylation of D-malate to pyruvate. The chain is Tartrate dehydrogenase/decarboxylase from Pseudomonas putida (Arthrobacter siderocapsulatus).